Reading from the N-terminus, the 323-residue chain is Voltage-dependent calcium channel gamma-2 subunit (323 aa).

The helical transmembrane segment at 10 to 30 (MLLTTVGAFAAFSLMTIAVGT) threads the bilayer. The N-linked (GlcNAc...) asparagine glycan is linked to Asn48. 3 helical membrane passes run 104 to 124 (SSIF…CIAA), 134 to 154 (IILS…IGII), and 182 to 202 (FGAL…HMFI). Residues 233–261 (YQRRSRSSSRSTEPSHSRDASPVGVKGFN) are disordered. Ser253 bears the Phosphoserine mark. Tyr271 carries the phosphotyrosine modification. The residue at position 321 (Thr321) is a Phosphothreonine; by PKA.

This sequence belongs to the PMP-22/EMP/MP20 family. CACNG subfamily. In terms of assembly, the L-type calcium channel is composed of five subunits: alpha-1, alpha-2/delta, beta and gamma. Interacts with the PDZ domains of DLG4/PSD-95 and DLG1/SAP97. May interact with GOPC. Acts as an auxiliary subunit for AMPA-selective glutamate receptors (AMPARs). Found in a complex with GRIA1, GRIA2, GRIA3, GRIA4, CNIH2, CNIH3, CACNG3, CACNG4, CACNG5, CACNG7 and CACNG8. Interacts with GRIA1 and GRIA2. Interacts with MPP2. Post-translationally, phosphorylation of Thr-321 by PKA impairs interaction with DLG1 and DLG4. In terms of tissue distribution, brain.

It localises to the membrane. Its subcellular location is the synapse. The protein resides in the synaptosome. In terms of biological role, regulates the trafficking and gating properties of AMPA-selective glutamate receptors (AMPARs). Promotes their targeting to the cell membrane and synapses and modulates their gating properties by slowing their rates of activation, deactivation and desensitization. Does not show subunit-specific AMPA receptor regulation and regulates all AMPAR subunits. Thought to stabilize the calcium channel in an inactivated (closed) state. This is Voltage-dependent calcium channel gamma-2 subunit (Cacng2) from Mus musculus (Mouse).